Reading from the N-terminus, the 230-residue chain is Uracil-DNA glycosylase (230 aa).

Catalysis depends on D71, which acts as the Proton acceptor.

The protein belongs to the uracil-DNA glycosylase (UDG) superfamily. UNG family.

Its subcellular location is the cytoplasm. It carries out the reaction Hydrolyzes single-stranded DNA or mismatched double-stranded DNA and polynucleotides, releasing free uracil.. Excises uracil residues from the DNA which can arise as a result of misincorporation of dUMP residues by DNA polymerase or due to deamination of cytosine. This chain is Uracil-DNA glycosylase, found in Tropheryma whipplei (strain TW08/27) (Whipple's bacillus).